Consider the following 273-residue polypeptide: 2,3,4,5-tetrahydropyridine-2,6-dicarboxylate N-succinyltransferase (273 aa).

Substrate contacts are provided by Arg104 and Asp141.

The protein belongs to the transferase hexapeptide repeat family. Homotrimer.

It localises to the cytoplasm. The enzyme catalyses (S)-2,3,4,5-tetrahydrodipicolinate + succinyl-CoA + H2O = (S)-2-succinylamino-6-oxoheptanedioate + CoA. The protein operates within amino-acid biosynthesis; L-lysine biosynthesis via DAP pathway; LL-2,6-diaminopimelate from (S)-tetrahydrodipicolinate (succinylase route): step 1/3. This is 2,3,4,5-tetrahydropyridine-2,6-dicarboxylate N-succinyltransferase from Psychrobacter arcticus (strain DSM 17307 / VKM B-2377 / 273-4).